The chain runs to 265 residues: Phosphonates import ATP-binding protein PhnC (265 aa).

The ABC transporter domain occupies Leu3–Gln247. Gly36–Ser43 is an ATP binding site.

This sequence belongs to the ABC transporter superfamily. Phosphonates importer (TC 3.A.1.9.1) family. As to quaternary structure, the complex is composed of two ATP-binding proteins (PhnC), two transmembrane proteins (PhnE) and a solute-binding protein (PhnD).

Its subcellular location is the cell inner membrane. It carries out the reaction phosphonate(out) + ATP + H2O = phosphonate(in) + ADP + phosphate + H(+). In terms of biological role, part of the ABC transporter complex PhnCDE involved in phosphonates import. Responsible for energy coupling to the transport system. This is Phosphonates import ATP-binding protein PhnC from Pseudomonas fluorescens (strain Pf0-1).